The primary structure comprises 295 residues: Ectoine dioxygenase (295 aa).

Gln-129 serves as a coordination point for L-ectoine. Lys-135 contributes to the 2-oxoglutarate binding site. Residues His-146, Asp-148, and His-247 each contribute to the Fe cation site.

The protein belongs to the PhyH family. EctD subfamily. In terms of assembly, homodimer. Fe(2+) is required as a cofactor.

It carries out the reaction L-ectoine + 2-oxoglutarate + O2 = 5-hydroxyectoine + succinate + CO2. Involved in the biosynthesis of 5-hydroxyectoine, called compatible solute, which helps organisms to survive extreme osmotic stress by acting as a highly soluble organic osmolyte. Catalyzes the 2-oxoglutarate-dependent selective hydroxylation of L-ectoine to yield (4S,5S)-5-hydroxyectoine. This chain is Ectoine dioxygenase, found in Streptomyces avermitilis (strain ATCC 31267 / DSM 46492 / JCM 5070 / NBRC 14893 / NCIMB 12804 / NRRL 8165 / MA-4680).